Reading from the N-terminus, the 122-residue chain is Non-specific lipid-transfer protein (122 aa).

The N-terminal stretch at 1 to 19 (MGVSRACFVVMVVVYMVVA) is a signal peptide. Positions 20–29 (ATPNVKLAEA) are excised as a propeptide. Cystine bridges form between C32/C81, C42/C58, C59/C104, and C79/C118.

In terms of assembly, monomer.

Its function is as follows. Plant non-specific lipid-transfer proteins transfer phospholipids as well as galactolipids across membranes. May play a role in wax or cutin deposition in the cell walls of expanding epidermal cells and certain secretory tissues. Binds saturated fatty acids, unsaturated fatty acids, lysolipids and, with highest efficiency, jasmonic acid. Has weak antimicrobial activity against fungi. Inhibits spore germination and hyphae elongation in A.niger VKM F-2259 and N.crassa VKM F-184. Has no antibacterial activity against A.tumefaciens A281, C.michiganensis VKM Ac-144 and P.syringae VKM B-1546. This chain is Non-specific lipid-transfer protein, found in Anethum graveolens (Dill).